Consider the following 275-residue polypeptide: NAD kinase (275 aa).

The Proton acceptor role is filled by aspartate 66. NAD(+) contacts are provided by residues 66–67 (DG), histidine 71, 135–136 (NE), lysine 146, arginine 163, aspartate 165, and 176–181 (TAYAMS).

Belongs to the NAD kinase family. A divalent metal cation is required as a cofactor.

The protein localises to the cytoplasm. It catalyses the reaction NAD(+) + ATP = ADP + NADP(+) + H(+). Functionally, involved in the regulation of the intracellular balance of NAD and NADP, and is a key enzyme in the biosynthesis of NADP. Catalyzes specifically the phosphorylation on 2'-hydroxyl of the adenosine moiety of NAD to yield NADP. This Methanosphaera stadtmanae (strain ATCC 43021 / DSM 3091 / JCM 11832 / MCB-3) protein is NAD kinase.